We begin with the raw amino-acid sequence, 64 residues long: Crotamine CRO3 (64 aa).

A signal peptide spans 1–22 (MILYLLFAFLFLAFLSEPGNAY). 3 disulfide bridges follow: C25–C57, C32–C51, and C39–C58.

It belongs to the crotamine-myotoxin family. Monomer. As to expression, expressed by the venom gland.

It localises to the secreted. In terms of biological role, cationic peptide that possesses multiple functions. It acts as a cell-penetrating peptide (CPP), and as a potent voltage-gated potassium channel (Kv) inhibitor. It exhibits antimicrobial activities, hind limb paralysis, and severe muscle necrosis by a non-enzymatic mechanism. The protein is Crotamine CRO3 (CRO3) of Crotalus durissus terrificus (South American rattlesnake).